We begin with the raw amino-acid sequence, 335 residues long: Mesoderm-specific transcript homolog protein (335 aa).

3 consecutive transmembrane segments (helical) span residues 13 to 33 (WWVQ…HIPP), 88 to 108 (IWEG…LGFG), and 266 to 286 (VGAL…LDPV). The 240-residue stretch at 71–310 (IVVLLHGFPT…PRSTVSILDD (240 aa)) folds into the AB hydrolase-1 domain. Positions 98–103 (RVIALD) match the RVIALD motif.

It belongs to the AB hydrolase superfamily. No detectable transcripts during preimplantation development. Isoform 1 was not detected in either in vitro-matured oocytes (IVF) or parthenogenetically activated (PA) blastocyst. Isoform 2 was expressed in IVF and PA blastocysts.

Its subcellular location is the endoplasmic reticulum membrane. This Bos taurus (Bovine) protein is Mesoderm-specific transcript homolog protein (MEST).